A 188-amino-acid chain; its full sequence is Xanthine phosphoribosyltransferase (188 aa).

2 residues coordinate xanthine: Leu-20 and Asn-27. 127–131 serves as a coordination point for 5-phospho-alpha-D-ribose 1-diphosphate; the sequence is AYGNA. Lys-155 is a binding site for xanthine.

Belongs to the purine/pyrimidine phosphoribosyltransferase family. Xpt subfamily. As to quaternary structure, homodimer.

It is found in the cytoplasm. It catalyses the reaction XMP + diphosphate = xanthine + 5-phospho-alpha-D-ribose 1-diphosphate. The protein operates within purine metabolism; XMP biosynthesis via salvage pathway; XMP from xanthine: step 1/1. Functionally, converts the preformed base xanthine, a product of nucleic acid breakdown, to xanthosine 5'-monophosphate (XMP), so it can be reused for RNA or DNA synthesis. The protein is Xanthine phosphoribosyltransferase of Parabacteroides distasonis (strain ATCC 8503 / DSM 20701 / CIP 104284 / JCM 5825 / NCTC 11152).